Reading from the N-terminus, the 234-residue chain is uncharacterized protein (234 aa).

An HTH tetR-type domain is found at V24–T83. The segment at residues S46–F65 is a DNA-binding region (H-T-H motif).

This is an uncharacterized protein from Mycobacterium tuberculosis (strain CDC 1551 / Oshkosh).